We begin with the raw amino-acid sequence, 68 residues long: Large ribosomal subunit protein uL29 (68 aa).

This sequence belongs to the universal ribosomal protein uL29 family.

This is Large ribosomal subunit protein uL29 from Rhodopseudomonas palustris (strain BisB18).